We begin with the raw amino-acid sequence, 291 residues long: Kidney mitochondrial carrier protein 1 (291 aa).

3 Solcar repeats span residues 7 to 96, 104 to 189, and 198 to 289; these read KPFI…LKRL, ETLV…TKKH, and DTVY…LKKL. 6 helical membrane passes run 9–26, 71–89, 106–124, 164–183, 204–224, and 264–283; these read FIYG…TFPI, GIAP…KIGT, LVLN…SCIA, GVSL…LPVY, FLSS…VDVV, and GFWP…FITY.

Belongs to the mitochondrial carrier (TC 2.A.29) family.

The protein localises to the mitochondrion inner membrane. The enzyme catalyses sulfite(in) + sulfate(out) = sulfite(out) + sulfate(in). It carries out the reaction thiosulfate(in) + sulfate(out) = thiosulfate(out) + sulfate(in). It catalyses the reaction sulfate(out) + phosphate(in) = sulfate(in) + phosphate(out). The catalysed reaction is oxalate(in) + sulfate(out) = oxalate(out) + sulfate(in). The enzyme catalyses malonate(in) + sulfate(out) = malonate(out) + sulfate(in). It carries out the reaction maleate(in) + sulfate(out) = maleate(out) + sulfate(in). It catalyses the reaction (S)-malate(in) + sulfate(out) = (S)-malate(out) + sulfate(in). The catalysed reaction is (3S)-citramalate(in) + sulfate(out) = (3S)-citramalate(out) + sulfate(in). The enzyme catalyses (3R)-citramalate(in) + sulfate(out) = (3R)-citramalate(out) + sulfate(in). It carries out the reaction sulfate(out) + succinate(in) = sulfate(in) + succinate(out). It catalyses the reaction (S,S)-tartrate(in) + sulfate(out) = (S,S)-tartrate(out) + sulfate(in). The catalysed reaction is (2R,3R)-tartrate(in) + sulfate(out) = (2R,3R)-tartrate(out) + sulfate(in). The enzyme catalyses D-aspartate(in) + sulfate(out) = D-aspartate(out) + sulfate(in). It carries out the reaction L-aspartate(in) + sulfate(out) = L-aspartate(out) + sulfate(in). It catalyses the reaction sulfate(in) = sulfate(out). The catalysed reaction is phosphate(in) = phosphate(out). The enzyme catalyses (S)-malate(out) = (S)-malate(in). In terms of biological role, probable transporter. Antiporter that transports inorganic anions (sulfate, sulfite, thiosulfate and phosphate) and, to a lesser extent, a variety of dicarboxylates (e.g. malonate, malate and citramalate) and, even more so, aspartate. The sulfate/sulfate exchange is much higher than the phosphate/phosphate and malate/malate exchanges. The transport affinities is higher for sulfate and thiosulfate than for any other substrate. May catalyze the export of sulfite and thiosulfate (the hydrogen sulfide degradation products) from the mitochondria, thereby modulating the level of the hydrogen sulfide. Also may mediate a very low unidirectional transport of sulfate, phosphate and (S)-malate. The protein is Kidney mitochondrial carrier protein 1 of Xenopus laevis (African clawed frog).